The following is a 131-amino-acid chain: Single-stranded DNA-binding protein 2 (131 aa).

In terms of domain architecture, SSB spans 1–103 (MYNKVIMIGR…VLASSFQLLE (103 aa)). Residues 126 to 131 (EEELPF) carry the Important for interaction with partner proteins motif.

In terms of assembly, homotetramer.

Functionally, plays an important role in DNA replication, recombination and repair. Binds to ssDNA and to an array of partner proteins to recruit them to their sites of action during DNA metabolism. The polypeptide is Single-stranded DNA-binding protein 2 (ssb2) (Streptococcus agalactiae serotype III (strain NEM316)).